The sequence spans 772 residues: Larval serum protein 1 gamma chain (772 aa).

An N-terminal signal peptide occupies residues 1–16 (MKLTLVILALVACVTA). Asn-242 carries N-linked (GlcNAc...) asparagine glycosylation.

Belongs to the hemocyanin family. As to quaternary structure, heterohexamer, composed of three subunits, alpha, beta and gamma. In terms of tissue distribution, larval hemolymph.

It localises to the secreted. It is found in the extracellular space. Its function is as follows. Larval storage protein (LSP) which may serve as a store of amino acids for synthesis of adult proteins. The polypeptide is Larval serum protein 1 gamma chain (Lsp1gamma) (Drosophila melanogaster (Fruit fly)).